The following is a 176-amino-acid chain: Small ribosomal subunit protein uS5 (176 aa).

Residues 11–74 form the S5 DRBM domain; the sequence is LSEVLVDVNR…QAAKKRMMKV (64 aa).

This sequence belongs to the universal ribosomal protein uS5 family. Part of the 30S ribosomal subunit. Contacts proteins S4 and S8.

Its function is as follows. With S4 and S12 plays an important role in translational accuracy. In terms of biological role, located at the back of the 30S subunit body where it stabilizes the conformation of the head with respect to the body. This is Small ribosomal subunit protein uS5 from Rickettsia peacockii (strain Rustic).